Reading from the N-terminus, the 214-residue chain is ATP phosphoribosyltransferase (214 aa).

This sequence belongs to the ATP phosphoribosyltransferase family. Short subfamily. As to quaternary structure, heteromultimer composed of HisG and HisZ subunits.

It localises to the cytoplasm. It carries out the reaction 1-(5-phospho-beta-D-ribosyl)-ATP + diphosphate = 5-phospho-alpha-D-ribose 1-diphosphate + ATP. It functions in the pathway amino-acid biosynthesis; L-histidine biosynthesis; L-histidine from 5-phospho-alpha-D-ribose 1-diphosphate: step 1/9. Its function is as follows. Catalyzes the condensation of ATP and 5-phosphoribose 1-diphosphate to form N'-(5'-phosphoribosyl)-ATP (PR-ATP). Has a crucial role in the pathway because the rate of histidine biosynthesis seems to be controlled primarily by regulation of HisG enzymatic activity. The polypeptide is ATP phosphoribosyltransferase (Azoarcus sp. (strain BH72)).